The sequence spans 391 residues: Succinyl-diaminopimelate desuccinylase (391 aa).

Position 78 (His-78) interacts with Zn(2+). Asp-80 is an active-site residue. Position 111 (Asp-111) interacts with Zn(2+). The active-site Proton acceptor is the Glu-145. Zn(2+) is bound by residues Glu-146, Glu-174, and His-360.

This sequence belongs to the peptidase M20A family. DapE subfamily. In terms of assembly, homodimer. Requires Zn(2+) as cofactor. Co(2+) is required as a cofactor.

The enzyme catalyses N-succinyl-(2S,6S)-2,6-diaminopimelate + H2O = (2S,6S)-2,6-diaminopimelate + succinate. Its pathway is amino-acid biosynthesis; L-lysine biosynthesis via DAP pathway; LL-2,6-diaminopimelate from (S)-tetrahydrodipicolinate (succinylase route): step 3/3. Functionally, catalyzes the hydrolysis of N-succinyl-L,L-diaminopimelic acid (SDAP), forming succinate and LL-2,6-diaminopimelate (DAP), an intermediate involved in the bacterial biosynthesis of lysine and meso-diaminopimelic acid, an essential component of bacterial cell walls. In Albidiferax ferrireducens (strain ATCC BAA-621 / DSM 15236 / T118) (Rhodoferax ferrireducens), this protein is Succinyl-diaminopimelate desuccinylase.